The chain runs to 369 residues: Biglycan (369 aa).

The signal sequence occupies residues 1 to 16; the sequence is MRPLWLLTLLLALSQA. A propeptide spanning residues 17–37 is cleaved from the precursor; sequence LPFEQKGFWDFTLDDGLLMMN. O-linked (Xyl...) (glycosaminoglycan) serine glycans are attached at residues S42 and S48. Intrachain disulfides connect C64–C70 and C68–C77. 12 LRR repeats span residues 83–103, 104–127, 128–151, 152–172, 173–196, 197–221, 222–242, 243–266, 267–290, 291–313, 314–343, and 344–369; these read KTVP…NNDI, SELR…NNKI, SKIH…KNHL, VEIP…DNRI, RKVP…GNPL, ENSG…EAKL, TGIP…HNKI, QAIE…HNQI, RMIE…NNKL, SRVP…SNNI, TKVG…NNPV, and PYWE…NYKK. N-linked (GlcNAc...) asparagine glycans are attached at residues N271 and N312. Residues C322 and C355 are joined by a disulfide bond.

The protein belongs to the small leucine-rich proteoglycan (SLRP) family. SLRP class I subfamily. As to quaternary structure, homodimer. Forms a ternary complex with MFAP2 and ELN. In terms of processing, the two attached glycosaminoglycan chains can be either chondroitin sulfate or dermatan sulfate. In terms of tissue distribution, found in several connective tissues, especially in articular cartilages.

The protein localises to the secreted. The protein resides in the extracellular space. It is found in the extracellular matrix. Its function is as follows. May be involved in collagen fiber assembly. This Rattus norvegicus (Rat) protein is Biglycan (Bgn).